Reading from the N-terminus, the 448-residue chain is Glutamate--tRNA ligase 1 (448 aa).

Positions 9–19 match the 'HIGH' region motif; it reads PSPTGKLHIGN. The 'KMSKS' region motif lies at 240-244; it reads KISKR. Lys243 provides a ligand contact to ATP.

The protein belongs to the class-I aminoacyl-tRNA synthetase family. Glutamate--tRNA ligase type 1 subfamily. Monomer.

The protein resides in the cytoplasm. The catalysed reaction is tRNA(Glu) + L-glutamate + ATP = L-glutamyl-tRNA(Glu) + AMP + diphosphate. Catalyzes the attachment of glutamate to tRNA(Glu) in a two-step reaction: glutamate is first activated by ATP to form Glu-AMP and then transferred to the acceptor end of tRNA(Glu). The polypeptide is Glutamate--tRNA ligase 1 (Orientia tsutsugamushi (strain Ikeda) (Rickettsia tsutsugamushi)).